The chain runs to 532 residues: KICSTOR complex protein ITFG2 (532 aa).

An FG-GAP 1; atypical repeat occupies 19 to 48; sequence FPHAICLGDVDNDTLNELVVGDTSGKLSVY. Ser104 bears the Phosphoserine mark. An FG-GAP 2; atypical repeat occupies 126–155; the sequence is NTKVMLISDIDGDGRCELVVGYTDRVVRAF. The interval 248–271 is disordered; the sequence is PHPQQERLHSPHRQHQASHSPDSS.

Part of the KICSTOR complex composed of KPTN, ITFG2, KICS2 and SZT2. SZT2 probably serves as a link between the other three proteins in the KICSTOR complex and may mediate the direct interaction with the GATOR complex via GATOR1. The KICSTOR complex interacts directly with the GATOR1 complex and most probably indirectly with the GATOR2 complex in an amino acid-independent manner.

Its subcellular location is the lysosome membrane. In terms of biological role, as part of the KICSTOR complex functions in the amino acid-sensing branch of the TORC1 signaling pathway. Recruits, in an amino acid-independent manner, the GATOR1 complex to the lysosomal membranes and allows its interaction with GATOR2 and the RAG GTPases. Functions upstream of the RAG GTPases and is required to negatively regulate mTORC1 signaling in absence of amino acids. In absence of the KICSTOR complex mTORC1 is constitutively localized to the lysosome and activated. The KICSTOR complex is also probably involved in the regulation of mTORC1 by glucose. In Bos taurus (Bovine), this protein is KICSTOR complex protein ITFG2.